The following is a 299-amino-acid chain: Prohibitin-2 (299 aa).

Residue Ala2 is modified to N-acetylalanine. Residues 19–49 (MGTALKLLLGAGAVAYGIRESVFTVEGGHRA) form a necessary for transcriptional repression region. A Phosphotyrosine modification is found at Tyr128. Lys147 is modified (N6-acetyllysine). The segment at 150-174 (ASQLITQRAQVSLLIRRELTERAKD) is necessary for transcriptional repression. Ser151 is subject to Phosphoserine. The stretch at 190–238 (SREYTAAVEAKQVAQQEAQRAQFLVEKAKQEQRQKIVQAEGEAEAARML) forms a coiled coil. Lys200, Lys250, and Lys262 each carry N6-acetyllysine.

Belongs to the prohibitin family. The mitochondrial prohibitin complex consists of two subunits (PHB1 and PHB2), assembled into a membrane-associated ring-shaped supercomplex of approximately 1 mDa. Interacts with ESR1, HDAC1 and HDAC5. Interacts with ZNF703. Interacts with STOML2. Interacts with ARFGEF3. Interacts with SPHK2. Interacts with COX4I1; the interaction associates PHB2 with COX. Interacts with MAP1LC3B (membrane-bound form LC3-II); the interaction is direct and upon mitochondrial depolarization and proteasome-dependent outer membrane rupture. Interacts with IGFBP6 (via C-terminal domain). Interacts with CLPB. Interacts with CD86 (via cytoplasmic domain); the interactions increases after priming with CD40. Interacts with AFG3L2. Interacts with DNAJC19. Interacts with AKT2; this interaction may be important for myogenic differentiation. Phosphorylated. Tyrosine phosphorylation is indirectly stimulated by IGFBP6.

Its subcellular location is the mitochondrion inner membrane. It localises to the cytoplasm. It is found in the nucleus. The protein resides in the cell membrane. Its function is as follows. Protein with pleiotropic attributes mediated in a cell-compartment- and tissue-specific manner, which include the plasma membrane-associated cell signaling functions, mitochondrial chaperone, and transcriptional co-regulator of transcription factors and sex steroid hormones in the nucleus. Functionally, in the mitochondria, together with PHB, forms large ring complexes (prohibitin complexes) in the inner mitochondrial membrane (IMM) and functions as a chaperone protein that stabilizes mitochondrial respiratory enzymes and maintains mitochondrial integrity in the IMM, which is required for mitochondrial morphogenesis, neuronal survival, and normal lifespan. The prohibitin complex, with DNAJC19, regulates cardiolipin remodeling and the protein turnover of OMA1 in a cardiolipin-binding manner. Also regulates cytochrome-c oxidase assembly (COX) and mitochondrial respiration. Binding to sphingoid 1-phosphate (SPP) modulates its regulator activity. Has a key role of mitophagy receptor involved in targeting mitochondria for autophagic degradation. Involved in mitochondrial-mediated antiviral innate immunity, activates RIG-I-mediated signal transduction and production of IFNB1 and pro-inflammatory cytokine IL6. In the nucleus, serves as transcriptional co-regulator. Acts as a mediator of transcriptional repression by nuclear hormone receptors via recruitment of histone deacetylases. Functions as an estrogen receptor (ER)-selective coregulator that potentiates the inhibitory activities of antiestrogens and represses the activity of estrogens. Competes with NCOA1 for modulation of ER transcriptional activity. In terms of biological role, in the plasma membrane, is involved in IGFBP6-induced cell migration. Cooperates with CD86 to mediate CD86-signaling in B lymphocytes that regulates the level of IgG1 produced through the activation of distal signaling intermediates. Upon CD40 engagement, required to activate NF-kappa-B signaling pathway via phospholipase C and protein kinase C activation. The sequence is that of Prohibitin-2 (PHB2) from Bos taurus (Bovine).